Here is a 513-residue protein sequence, read N- to C-terminus: Histidine ammonia-lyase (513 aa).

The 5-imidazolinone (Ala-Gly) cross-link spans 146-148 (ASG). A 2,3-didehydroalanine (Ser) modification is found at Ser-147.

This sequence belongs to the PAL/histidase family. Contains an active site 4-methylidene-imidazol-5-one (MIO), which is formed autocatalytically by cyclization and dehydration of residues Ala-Ser-Gly.

Its subcellular location is the cytoplasm. It catalyses the reaction L-histidine = trans-urocanate + NH4(+). It functions in the pathway amino-acid degradation; L-histidine degradation into L-glutamate; N-formimidoyl-L-glutamate from L-histidine: step 1/3. This is Histidine ammonia-lyase from Shewanella oneidensis (strain ATCC 700550 / JCM 31522 / CIP 106686 / LMG 19005 / NCIMB 14063 / MR-1).